A 53-amino-acid chain; its full sequence is UPF0391 membrane protein PputGB1_0151 (53 aa).

2 helical membrane passes run 4 to 24 (WAITFLIIAIVAAVLGFGGIA) and 29 to 49 (GIAKILFIVFLVLFVASFFFG).

The protein belongs to the UPF0391 family.

The protein resides in the cell membrane. The protein is UPF0391 membrane protein PputGB1_0151 of Pseudomonas putida (strain GB-1).